A 715-amino-acid chain; its full sequence is Probable serine/threonine-protein kinase mkcE (715 aa).

Disordered stretches follow at residues 1–125, 228–330, and 366–385; these read MQKI…SQHQ, QLQQ…TTTT, and GVDNLSSTTTSLSQNPPIQP. The span at 42–53 shows a compositional bias: gly residues; the sequence is YDGGGSGSGSGG. Low complexity-rich tracts occupy residues 54 to 70 and 80 to 125; these read SSSNSSGSSRKINTGGN and SPSN…SQHQ. Residues 207–241 are a coiled coil; that stretch reads TGKKNFQQQQLQQLQQQQQQQQLQQQQHQQHNHQI. A compositionally biased stretch (low complexity) spans 367–378; that stretch reads VDNLSSTTTSLS. A Protein kinase domain is found at 427 to 683; sequence RIGENAEVKG…PTQLLQHPFI (257 aa). ATP is bound by residues 433-441 and Lys-459; that span reads EVKGAFGTV. The active-site Proton acceptor is the Asp-550.

The protein belongs to the protein kinase superfamily. STE Ser/Thr protein kinase family. STE20 subfamily. Mg(2+) is required as a cofactor.

The enzyme catalyses L-seryl-[protein] + ATP = O-phospho-L-seryl-[protein] + ADP + H(+). It catalyses the reaction L-threonyl-[protein] + ATP = O-phospho-L-threonyl-[protein] + ADP + H(+). The polypeptide is Probable serine/threonine-protein kinase mkcE (Dictyostelium discoideum (Social amoeba)).